A 3746-amino-acid chain; its full sequence is N-(5-amino-5-carboxypentanoyl)-L-cysteinyl-D-valine synthase (3746 aa).

Residues 299-711 (EEVVERHEDK…GRADFQIKLR (413 aa)) form an adenylation (A) domain 1 region. The 78-residue stretch at 818-895 (DLRGDTEIAL…RMADLLQNKQ (78 aa)) folds into the Carrier 1 domain. Ser855 carries the O-(pantetheine 4'-phosphoryl)serine modification. Residues 918–1372 (NIYLANSLQQ…YLSSIQLEQL (455 aa)) form a condensation (C) domain 1 region. The interval 1391 to 1801 (FENEASQKPD…GRNDFQVKIR (411 aa)) is adenylation (A) domain 2. Positions 1902 to 1979 (PPRSEIERSL…AQTHLILNDA (78 aa)) constitute a Carrier 2 domain. Ser1939 is modified (O-(pantetheine 4'-phosphoryl)serine). Positions 1994 to 2434 (QMIPVSRAQE…SELSAEGINE (441 aa)) are condensation (C) domain 2. Positions 2478–2883 (AFLAAEKIAV…GRGDLQIKMR (406 aa)) are adenylation (A) domain 3. Residues 2991–3066 (PPRNIIEAKM…ALHDHVFMKD (76 aa)) form the Carrier 3 domain. Ser3026 carries the post-translational modification O-(pantetheine 4'-phosphoryl)serine. An epimerase (E) domain region spans residues 3084 to 3500 (GEAPLLPIQD…NKILDGRASQ (417 aa)). Residues 3530–3732 (TLFLLPPGEG…FSWVGNPQQV (203 aa)) are thioesterase (TE) domain.

Belongs to the NRP synthetase family. It depends on pantetheine 4'-phosphate as a cofactor. Requires Mg(2+) as cofactor.

It localises to the cytoplasm. Its subcellular location is the cytosol. The protein localises to the vacuole membrane. The enzyme catalyses L-2-aminoadipate + L-valine + L-cysteine + 3 ATP + H2O = N-[(5S)-5-amino-5-carboxypentanoyl]-L-cysteinyl-D-valine + 3 AMP + 3 diphosphate + 3 H(+). It participates in antibiotic biosynthesis; penicillin G biosynthesis; penicillin G from L-alpha-aminoadipate and L-cysteine and L-valine: step 1/3. In terms of biological role, nonribosomal peptide synthetase; part of the gene cluster that mediates the biosynthesis of penicillin, the world's most important antibiotic. The trimodular NRPS acvA produces the tripeptide N-[(5S)-5-amino-5-carboxypentanoyl]-L-cysteinyl-D-valine (LLD-ACV or ACV) via condensation of the 3 residues L-2-aminoadipate, L-cysteine and L-valine. The precursor amino acids for penicillin biosynthesis are withdrawn from the vacuolar amino acid pool by the MFS-type transporter penV. Each of the constituent amino acids of the tripeptide ACV are activated as aminoacyl-adenylates with peptide bonds formed through the participation of amino acid thioester intermediates. The penicillin biosynthesis occurs via 3 enzymatic steps, the first corresponding to the production of the tripeptide N-[(5S)-5-amino-5-carboxypentanoyl]-L-cysteinyl-D-valine (LLD-ACV or ACV) by the NRPS acvA. The tripeptide ACV is then cyclized to isopenicillin N (IPN) by the isopenicillin N synthase ipnA that forms the beta-lactam nucleus. Finally, the alpha-aminoadipyl side chain is exchanged for phenylacetic acid by the isopenicillin N acyltransferase aatA to yield penicillin in the peroxisomal matrix. The protein is N-(5-amino-5-carboxypentanoyl)-L-cysteinyl-D-valine synthase of Penicillium chrysogenum (Penicillium notatum).